Reading from the N-terminus, the 326-residue chain is Probable cell division protein WhiA (326 aa).

The segment at residues 275 to 308 is a DNA-binding region (H-T-H motif); sequence SLDELGHYADPPMTKDAVAGRIRRLLAMADKRAS.

The protein belongs to the WhiA family.

Involved in cell division and chromosome segregation. The sequence is that of Probable cell division protein WhiA from Leifsonia xyli subsp. xyli (strain CTCB07).